A 260-amino-acid polypeptide reads, in one-letter code: Carbonic anhydrase 3 (260 aa).

An N-acetylalanine modification is found at alanine 2. In terms of domain architecture, Alpha-carbonic anhydrase spans 3–259 (KEWGYADHNG…IKGRIVKASF (257 aa)). 4 positions are modified to phosphoserine: serine 29, serine 43, serine 50, and serine 55. The tract at residues 64 to 67 (KTCR) is involved in proton transfer. Threonine 73 is modified (phosphothreonine). Zn(2+) is bound by residues histidine 94, histidine 96, and histidine 119. A Phosphotyrosine modification is found at tyrosine 127. 2 positions are modified to S-glutathionyl cysteine: cysteine 182 and cysteine 187. 198 to 199 (TT) serves as a coordination point for substrate. At threonine 216 the chain carries Phosphothreonine. At serine 219 the chain carries Phosphoserine.

This sequence belongs to the alpha-carbonic anhydrase family. It depends on Zn(2+) as a cofactor. S-thiolated both by thiol-disulfide exchange with glutathione disulfide and by oxyradical-initiated S-thiolation with reduced glutathione. In terms of processing, S-glutathionylated in hepatocytes under oxidative stress.

The protein localises to the cytoplasm. The catalysed reaction is hydrogencarbonate + H(+) = CO2 + H2O. Inhibited by acetazolamide. In terms of biological role, reversible hydration of carbon dioxide. In Bos taurus (Bovine), this protein is Carbonic anhydrase 3 (CA3).